The chain runs to 65 residues: Large ribosomal subunit protein bL35 (65 aa).

The protein belongs to the bacterial ribosomal protein bL35 family.

The sequence is that of Large ribosomal subunit protein bL35 from Prochlorococcus marinus subsp. pastoris (strain CCMP1986 / NIES-2087 / MED4).